Consider the following 575-residue polypeptide: Urease subunit alpha (575 aa).

The region spanning 138–575 (GAVDCHVHLI…LPMTQRYFLF (438 aa)) is the Urease domain. His143, His145, and Lys226 together coordinate Ni(2+). Lys226 is modified (N6-carboxylysine). His228 contributes to the substrate binding site. Residues His255 and His281 each coordinate Ni(2+). Catalysis depends on His329, which acts as the Proton donor. Asp369 serves as a coordination point for Ni(2+).

This sequence belongs to the metallo-dependent hydrolases superfamily. Urease alpha subunit family. Heterotrimer of UreA (gamma), UreB (beta) and UreC (alpha) subunits. Three heterotrimers associate to form the active enzyme. It depends on Ni cation as a cofactor. Carboxylation allows a single lysine to coordinate two nickel ions.

The protein localises to the cytoplasm. It catalyses the reaction urea + 2 H2O + H(+) = hydrogencarbonate + 2 NH4(+). It functions in the pathway nitrogen metabolism; urea degradation; CO(2) and NH(3) from urea (urease route): step 1/1. This chain is Urease subunit alpha, found in Frankia casuarinae (strain DSM 45818 / CECT 9043 / HFP020203 / CcI3).